Consider the following 223-residue polypeptide: Uracil-DNA glycosylase (223 aa).

Catalysis depends on D66, which acts as the Proton acceptor.

This sequence belongs to the uracil-DNA glycosylase (UDG) superfamily. UNG family.

The protein localises to the cytoplasm. The enzyme catalyses Hydrolyzes single-stranded DNA or mismatched double-stranded DNA and polynucleotides, releasing free uracil.. Its function is as follows. Excises uracil residues from the DNA which can arise as a result of misincorporation of dUMP residues by DNA polymerase or due to deamination of cytosine. This Sulfurimonas denitrificans (strain ATCC 33889 / DSM 1251) (Thiomicrospira denitrificans (strain ATCC 33889 / DSM 1251)) protein is Uracil-DNA glycosylase.